A 284-amino-acid polypeptide reads, in one-letter code: Tropomyosin-1 (284 aa).

Residues 1–284 adopt a coiled-coil conformation; sequence MDAIKKKMLA…DSTFAELAGY (284 aa). Residues 103-131 are disordered; that stretch reads EERLQSATEKLEEASKAADESERGRKVLE.

It belongs to the tropomyosin family. As to quaternary structure, homodimer.

Its function is as follows. Tropomyosin, in association with the troponin complex, plays a central role in the calcium dependent regulation of muscle contraction. This Biomphalaria glabrata (Bloodfluke planorb) protein is Tropomyosin-1.